Reading from the N-terminus, the 146-residue chain is MAKTIQAYIKLQVSAGTANPSPPIGPALGQKGINIMEFCKAFNTRTNNLEKGLPIPTIITVYSDKSFSFITKTPPASVLLKKAAGITKGSSKPNQNKVGTITMQQILDIAQIKKIDMTGSNIDNISKSIIGTANSIGLIIAEGTNK.

It belongs to the universal ribosomal protein uL11 family. In terms of assembly, part of the ribosomal stalk of the 50S ribosomal subunit. Interacts with L10 and the large rRNA to form the base of the stalk. L10 forms an elongated spine to which L12 dimers bind in a sequential fashion forming a multimeric L10(L12)X complex. Post-translationally, one or more lysine residues are methylated.

Functionally, forms part of the ribosomal stalk which helps the ribosome interact with GTP-bound translation factors. In Buchnera aphidicola subsp. Baizongia pistaciae (strain Bp), this protein is Large ribosomal subunit protein uL11.